Consider the following 950-residue polypeptide: Leucine--tRNA ligase (950 aa).

Positions 72 to 83 (PYPSGEGLHVGH) match the 'HIGH' region motif. The 'KMSKS' region motif lies at 722–726 (KIGKS). Residue lysine 725 coordinates ATP.

This sequence belongs to the class-I aminoacyl-tRNA synthetase family.

The protein resides in the cytoplasm. It catalyses the reaction tRNA(Leu) + L-leucine + ATP = L-leucyl-tRNA(Leu) + AMP + diphosphate. This is Leucine--tRNA ligase from Mycobacterium sp. (strain KMS).